We begin with the raw amino-acid sequence, 269 residues long: Formamidopyrimidine-DNA glycosylase (269 aa).

Proline 2 serves as the catalytic Schiff-base intermediate with DNA. Glutamate 3 serves as the catalytic Proton donor. Lysine 57 acts as the Proton donor; for beta-elimination activity in catalysis. DNA-binding residues include histidine 90, arginine 109, and lysine 150. The FPG-type zinc finger occupies 235 to 269 (QVYGRKGEPCRVCGTPIVATKHAQRATFYCRHCQK). The active-site Proton donor; for delta-elimination activity is arginine 259.

Belongs to the FPG family. Monomer. Zn(2+) serves as cofactor.

It carries out the reaction Hydrolysis of DNA containing ring-opened 7-methylguanine residues, releasing 2,6-diamino-4-hydroxy-5-(N-methyl)formamidopyrimidine.. It catalyses the reaction 2'-deoxyribonucleotide-(2'-deoxyribose 5'-phosphate)-2'-deoxyribonucleotide-DNA = a 3'-end 2'-deoxyribonucleotide-(2,3-dehydro-2,3-deoxyribose 5'-phosphate)-DNA + a 5'-end 5'-phospho-2'-deoxyribonucleoside-DNA + H(+). In terms of biological role, involved in base excision repair of DNA damaged by oxidation or by mutagenic agents. Acts as a DNA glycosylase that recognizes and removes damaged bases. Has a preference for oxidized purines, such as 7,8-dihydro-8-oxoguanine (8-oxoG). Has AP (apurinic/apyrimidinic) lyase activity and introduces nicks in the DNA strand. Cleaves the DNA backbone by beta-delta elimination to generate a single-strand break at the site of the removed base with both 3'- and 5'-phosphates. The chain is Formamidopyrimidine-DNA glycosylase from Salmonella paratyphi C (strain RKS4594).